We begin with the raw amino-acid sequence, 203 residues long: Na(+)-translocating NADH-quinone reductase subunit E (203 aa).

6 consecutive transmembrane segments (helical) span residues 11-31 (SIFI…FLAV), 35-55 (ISTA…TVPL), 82-102 (FLGL…LEMF), 115-135 (GIFL…LFMV), 145-165 (MVYG…MAGV), and 181-201 (LGIT…FSGI).

It belongs to the NqrDE/RnfAE family. Composed of six subunits; NqrA, NqrB, NqrC, NqrD, NqrE and NqrF.

The protein resides in the cell inner membrane. The catalysed reaction is a ubiquinone + n Na(+)(in) + NADH + H(+) = a ubiquinol + n Na(+)(out) + NAD(+). Its function is as follows. NQR complex catalyzes the reduction of ubiquinone-1 to ubiquinol by two successive reactions, coupled with the transport of Na(+) ions from the cytoplasm to the periplasm. NqrA to NqrE are probably involved in the second step, the conversion of ubisemiquinone to ubiquinol. In Dichelobacter nodosus (strain VCS1703A), this protein is Na(+)-translocating NADH-quinone reductase subunit E.